A 464-amino-acid polypeptide reads, in one-letter code: Nuclear distribution protein nudF 2 (464 aa).

The 33-residue stretch at 9–41 (QAAELNKSIIAYLSAHGLAETLAAFRKESDFPD) folds into the LisH domain. A coiled-coil region spans residues 63–88 (NSTLMKKLLALESHNKALRNELNSTR). WD repeat units lie at residues 112–151 (SHRDSINCIAFHPKYSLIASGSGDLTIRIWDWEDSTLERT), 154–195 (GHTM…KNVK), 199–238 (GHDHIVSAVRFIPSGNLLASASRDMKVILWNVINGYRVKT), 241–280 (DHTGWVRDISPSFDGQFLLSTGDDMTVRLWEISASQPICK), 285–343 (GHEN…MTLT), 344–383 (GHASWVRAIAFHPGGKYLLSVSDDKTMRCWDLSQQGRCVK), 388–424 (AHDGFITCLKWVPGIAKDTRNGTMTISYQRKGSAELP), and 426–464 (SKLDEVGQPGVQIRCVLATGGEDQKIRVFALQANDRSHK).

This sequence belongs to the WD repeat LIS1/nudF family. As to quaternary structure, self-associates. Interacts with nudE and dynein.

The protein localises to the cytoplasm. The protein resides in the cytoskeleton. It is found in the spindle pole. Positively regulates the activity of the minus-end directed microtubule motor protein dynein. May enhance dynein-mediated microtubule sliding by targeting dynein to the microtubule plus end. Required for nuclear migration during vegetative growth as well as development. Required for retrograde early endosome (EE) transport from the hyphal tip. Required for localization of dynein to the mitotic spindle poles. Recruits additional proteins to the dynein complex at SPBs. In Penicillium rubens (strain ATCC 28089 / DSM 1075 / NRRL 1951 / Wisconsin 54-1255) (Penicillium chrysogenum), this protein is Nuclear distribution protein nudF 2.